A 115-amino-acid polypeptide reads, in one-letter code: Aspartate 1-decarboxylase (115 aa).

Ser25 functions as the Schiff-base intermediate with substrate; via pyruvic acid in the catalytic mechanism. Ser25 carries the pyruvic acid (Ser) modification. Thr57 lines the substrate pocket. The active-site Proton donor is Tyr58. 72 to 74 (GAA) is a binding site for substrate.

The protein belongs to the PanD family. As to quaternary structure, heterooctamer of four alpha and four beta subunits. Requires pyruvate as cofactor. In terms of processing, is synthesized initially as an inactive proenzyme, which is activated by self-cleavage at a specific serine bond to produce a beta-subunit with a hydroxyl group at its C-terminus and an alpha-subunit with a pyruvoyl group at its N-terminus.

Its subcellular location is the cytoplasm. The catalysed reaction is L-aspartate + H(+) = beta-alanine + CO2. Its pathway is cofactor biosynthesis; (R)-pantothenate biosynthesis; beta-alanine from L-aspartate: step 1/1. Catalyzes the pyruvoyl-dependent decarboxylation of aspartate to produce beta-alanine. This chain is Aspartate 1-decarboxylase, found in Campylobacter fetus subsp. fetus (strain 82-40).